Consider the following 212-residue polypeptide: Methylthioribulose-1-phosphate dehydratase (212 aa).

Histidine 97 and histidine 99 together coordinate Zn(2+).

Belongs to the aldolase class II family. MtnB subfamily. As to quaternary structure, homotetramer. Zn(2+) is required as a cofactor.

It catalyses the reaction 5-(methylsulfanyl)-D-ribulose 1-phosphate = 5-methylsulfanyl-2,3-dioxopentyl phosphate + H2O. It participates in amino-acid biosynthesis; L-methionine biosynthesis via salvage pathway; L-methionine from S-methyl-5-thio-alpha-D-ribose 1-phosphate: step 2/6. In terms of biological role, catalyzes the dehydration of methylthioribulose-1-phosphate (MTRu-1-P) into 2,3-diketo-5-methylthiopentyl-1-phosphate (DK-MTP-1-P). This is Methylthioribulose-1-phosphate dehydratase from Bacillus mycoides (strain KBAB4) (Bacillus weihenstephanensis).